The following is a 240-amino-acid chain: Transmembrane emp24 domain-containing protein 6 (240 aa).

An N-terminal signal peptide occupies residues 1 to 21 (MSPLLFGAGLVVLNLVTSARS). Over 22–200 (QKTEPLSGSG…FFLIQSNYNY (179 aa)) the chain is Lumenal. In terms of domain architecture, GOLD spans 53–138 (TECFWQFAHQ…SVQVYLNFGV (86 aa)). N107 and N156 each carry an N-linked (GlcNAc...) asparagine glycan. Residues 201–223 (VNWWSTAQSLVIILSGILQLYFL) traverse the membrane as a helical segment. Over 224–240 (KRLFNVPTTTDTKKPRC) the chain is Cytoplasmic.

The protein belongs to the EMP24/GP25L family.

It localises to the endoplasmic reticulum membrane. The protein is Transmembrane emp24 domain-containing protein 6 (TMED6) of Homo sapiens (Human).